Reading from the N-terminus, the 336-residue chain is Holliday junction branch migration complex subunit RuvB (336 aa).

The tract at residues 4 to 184 (ADRLVSADSS…FGIVQRLEFY (181 aa)) is large ATPase domain (RuvB-L). Residues I23, R24, G65, K68, T69, T70, 131–133 (EDY), R174, Y184, and R221 contribute to the ATP site. Residue T69 participates in Mg(2+) binding. Positions 185–255 (QIPDLQHIVS…IAAQALDMLN (71 aa)) are small ATPAse domain (RuvB-S). The interval 258–336 (AEGFDYMDRK…HFGITPPEMP (79 aa)) is head domain (RuvB-H). DNA contacts are provided by R294, R313, and R318.

Belongs to the RuvB family. As to quaternary structure, homohexamer. Forms an RuvA(8)-RuvB(12)-Holliday junction (HJ) complex. HJ DNA is sandwiched between 2 RuvA tetramers; dsDNA enters through RuvA and exits via RuvB. An RuvB hexamer assembles on each DNA strand where it exits the tetramer. Each RuvB hexamer is contacted by two RuvA subunits (via domain III) on 2 adjacent RuvB subunits; this complex drives branch migration. In the full resolvosome a probable DNA-RuvA(4)-RuvB(12)-RuvC(2) complex forms which resolves the HJ.

It localises to the cytoplasm. The enzyme catalyses ATP + H2O = ADP + phosphate + H(+). In terms of biological role, the RuvA-RuvB-RuvC complex processes Holliday junction (HJ) DNA during genetic recombination and DNA repair, while the RuvA-RuvB complex plays an important role in the rescue of blocked DNA replication forks via replication fork reversal (RFR). RuvA specifically binds to HJ cruciform DNA, conferring on it an open structure. The RuvB hexamer acts as an ATP-dependent pump, pulling dsDNA into and through the RuvAB complex. RuvB forms 2 homohexamers on either side of HJ DNA bound by 1 or 2 RuvA tetramers; 4 subunits per hexamer contact DNA at a time. Coordinated motions by a converter formed by DNA-disengaged RuvB subunits stimulates ATP hydrolysis and nucleotide exchange. Immobilization of the converter enables RuvB to convert the ATP-contained energy into a lever motion, pulling 2 nucleotides of DNA out of the RuvA tetramer per ATP hydrolyzed, thus driving DNA branch migration. The RuvB motors rotate together with the DNA substrate, which together with the progressing nucleotide cycle form the mechanistic basis for DNA recombination by continuous HJ branch migration. Branch migration allows RuvC to scan DNA until it finds its consensus sequence, where it cleaves and resolves cruciform DNA. This Klebsiella pneumoniae subsp. pneumoniae (strain ATCC 700721 / MGH 78578) protein is Holliday junction branch migration complex subunit RuvB.